The chain runs to 122 residues: S-adenosylmethionine decarboxylase proenzyme (122 aa).

Residue Ser-69 is the Schiff-base intermediate with substrate; via pyruvic acid of the active site. At Ser-69 the chain carries Pyruvic acid (Ser); by autocatalysis. The active-site Proton acceptor; for processing activity is the His-74. Cys-89 functions as the Proton donor; for catalytic activity in the catalytic mechanism.

Belongs to the prokaryotic AdoMetDC family. Type 1 subfamily. Heterotetramer of two alpha and two beta chains arranged as a dimer of alpha/beta heterodimers. The cofactor is pyruvate. In terms of processing, is synthesized initially as an inactive proenzyme. Formation of the active enzyme involves a self-maturation process in which the active site pyruvoyl group is generated from an internal serine residue via an autocatalytic post-translational modification. Two non-identical subunits are generated from the proenzyme in this reaction, and the pyruvate is formed at the N-terminus of the alpha chain, which is derived from the carboxyl end of the proenzyme. The post-translation cleavage follows an unusual pathway, termed non-hydrolytic serinolysis, in which the side chain hydroxyl group of the serine supplies its oxygen atom to form the C-terminus of the beta chain, while the remainder of the serine residue undergoes an oxidative deamination to produce ammonia and the pyruvoyl group blocking the N-terminus of the alpha chain.

The enzyme catalyses S-adenosyl-L-methionine + H(+) = S-adenosyl 3-(methylsulfanyl)propylamine + CO2. The protein operates within amine and polyamine biosynthesis; S-adenosylmethioninamine biosynthesis; S-adenosylmethioninamine from S-adenosyl-L-methionine: step 1/1. Functionally, catalyzes the decarboxylation of S-adenosylmethionine to S-adenosylmethioninamine (dcAdoMet), the propylamine donor required for the synthesis of the polyamines spermine and spermidine from the diamine putrescine. The sequence is that of S-adenosylmethionine decarboxylase proenzyme from Sulfolobus acidocaldarius (strain ATCC 33909 / DSM 639 / JCM 8929 / NBRC 15157 / NCIMB 11770).